The chain runs to 301 residues: Probable alpha-L-glutamate ligase (301 aa).

The 184-residue stretch at 104–287 (LQLLSRRGIG…VAGMIIGYLE (184 aa)) folds into the ATP-grasp domain. ATP is bound by residues K141, 178 to 179 (EY), D187, and 211 to 213 (RSN). Residues D248, E260, and N262 each coordinate Mg(2+). Residues D248, E260, and N262 each contribute to the Mn(2+) site.

Belongs to the RimK family. Mg(2+) is required as a cofactor. Mn(2+) serves as cofactor.

The chain is Probable alpha-L-glutamate ligase from Pseudomonas syringae pv. syringae (strain B728a).